A 431-amino-acid chain; its full sequence is UDP-N-acetylglucosamine 1-carboxyvinyltransferase (431 aa).

22 to 23 (KN) serves as a coordination point for phosphoenolpyruvate. A UDP-N-acetyl-alpha-D-glucosamine-binding site is contributed by arginine 102. The Proton donor role is filled by cysteine 126. At cysteine 126 the chain carries 2-(S-cysteinyl)pyruvic acid O-phosphothioketal. Residues aspartate 318 and isoleucine 340 each coordinate UDP-N-acetyl-alpha-D-glucosamine.

This sequence belongs to the EPSP synthase family. MurA subfamily.

Its subcellular location is the cytoplasm. It catalyses the reaction phosphoenolpyruvate + UDP-N-acetyl-alpha-D-glucosamine = UDP-N-acetyl-3-O-(1-carboxyvinyl)-alpha-D-glucosamine + phosphate. It functions in the pathway cell wall biogenesis; peptidoglycan biosynthesis. Functionally, cell wall formation. Adds enolpyruvyl to UDP-N-acetylglucosamine. The chain is UDP-N-acetylglucosamine 1-carboxyvinyltransferase from Bartonella quintana (strain Toulouse) (Rochalimaea quintana).